A 385-amino-acid chain; its full sequence is U6 small nuclear RNA (adenine-(43)-N(6))-methyltransferase (385 aa).

S-adenosyl-L-methionine-binding residues include Arg-54, Gly-83, Glu-106, and Asn-155.

It belongs to the methyltransferase superfamily. METTL16/RlmF family.

It localises to the cytoplasm. The protein localises to the nucleus. The catalysed reaction is adenosine in U6 snRNA + S-adenosyl-L-methionine = N(6)-methyladenosine in U6 snRNA + S-adenosyl-L-homocysteine + H(+). In terms of biological role, RNA N6-methyltransferase that mediates N6-methylation of adenine of U6 small nuclear RNA (U6 snRNA). In Schizosaccharomyces pombe (strain 972 / ATCC 24843) (Fission yeast), this protein is U6 small nuclear RNA (adenine-(43)-N(6))-methyltransferase.